The primary structure comprises 747 residues: Protein O-mannosyl-transferase 1 (747 aa).

9 consecutive transmembrane segments (helical) span residues 8–28 (PVVVTADINLSLVALTGMGLL), 40–60 (VVFDEVYYGQYISFYMKQIFF), 68–88 (FGHMVLALGGYLGGFDGNFLW), 99–119 (VPVWSLRLLPALAGALSVPMA), 122–142 (IVLELHFSHCAAMGAALLMLI), 154–174 (LLESVLIFFNLLAVLSYLKFF), 183–203 (SLSWWFWLTLTGVACSCAVGI), 206–226 (MGVFTYVLVLGVAAVHAWHLL), and 269–289 (LLVIPVVLYLLFFYVHLILVF). MIR domains follow at residues 318–381 (PLEV…VKDP), 392–449 (PRPV…LEIV), and 453–513 (SDTD…VEEH). N-linked (GlcNAc...) asparagine glycans are attached at residues N435, N471, and N539. 3 helical membrane-spanning segments follow: residues 597–617 (IVIWVSGSLALAIYALLSLWY), 636–656 (WVLAGALCAGGWAVNYLPFFL), and 661–681 (LFLYHYLPALTFQILLLPVVL).

It belongs to the glycosyltransferase 39 family. Interacts with POMT2. Widely expressed. Highly expressed in testis, heart and pancreas. Detected at lower levels in kidney, skeletal muscle, brain, placenta, lung and liver.

It localises to the endoplasmic reticulum membrane. The enzyme catalyses a di-trans,poly-cis-dolichyl beta-D-mannosyl phosphate + L-seryl-[protein] = 3-O-(alpha-D-mannosyl)-L-seryl-[protein] + a di-trans,poly-cis-dolichyl phosphate + H(+). It carries out the reaction a di-trans,poly-cis-dolichyl beta-D-mannosyl phosphate + L-threonyl-[protein] = 3-O-(alpha-D-mannosyl)-L-threonyl-[protein] + a di-trans,poly-cis-dolichyl phosphate + H(+). It functions in the pathway protein modification; protein glycosylation. Its activity is regulated as follows. Slightly activated by Mg(2+) and inhibited by both Ca(+) and Mn(2+). EDTA ha no effect on activity in vitro. In terms of biological role, transfers mannosyl residues to the hydroxyl group of serine or threonine residues. Coexpression of both POMT1 and POMT2 is necessary for enzyme activity, expression of either POMT1 or POMT2 alone is insufficient. Essentially dedicated to O-mannosylation of alpha-DAG1 and few other proteins but not of cadherins and protocaherins. The polypeptide is Protein O-mannosyl-transferase 1 (POMT1) (Homo sapiens (Human)).